Consider the following 483-residue polypeptide: Siroheme synthase (483 aa).

The precorrin-2 dehydrogenase /sirohydrochlorin ferrochelatase stretch occupies residues 1 to 203 (MNYFPIFANL…RQNTLAEREL (203 aa)). Residues 22–23 (AV) and 43–44 (KH) each bind NAD(+). S128 carries the post-translational modification Phosphoserine. The tract at residues 217-483 (GSVSLVGAGP…GGLNAGQRAA (267 aa)) is uroporphyrinogen-III C-methyltransferase. P226 contacts S-adenosyl-L-methionine. D249 acts as the Proton acceptor in catalysis. The active-site Proton donor is K271. Residues 302 to 304 (GGD), V307, 332 to 333 (TA), M384, and G413 contribute to the S-adenosyl-L-methionine site.

It in the N-terminal section; belongs to the precorrin-2 dehydrogenase / sirohydrochlorin ferrochelatase family. In the C-terminal section; belongs to the precorrin methyltransferase family.

It catalyses the reaction uroporphyrinogen III + 2 S-adenosyl-L-methionine = precorrin-2 + 2 S-adenosyl-L-homocysteine + H(+). The catalysed reaction is precorrin-2 + NAD(+) = sirohydrochlorin + NADH + 2 H(+). The enzyme catalyses siroheme + 2 H(+) = sirohydrochlorin + Fe(2+). Its pathway is cofactor biosynthesis; adenosylcobalamin biosynthesis; precorrin-2 from uroporphyrinogen III: step 1/1. It participates in cofactor biosynthesis; adenosylcobalamin biosynthesis; sirohydrochlorin from precorrin-2: step 1/1. The protein operates within porphyrin-containing compound metabolism; siroheme biosynthesis; precorrin-2 from uroporphyrinogen III: step 1/1. It functions in the pathway porphyrin-containing compound metabolism; siroheme biosynthesis; siroheme from sirohydrochlorin: step 1/1. Its pathway is porphyrin-containing compound metabolism; siroheme biosynthesis; sirohydrochlorin from precorrin-2: step 1/1. In terms of biological role, multifunctional enzyme that catalyzes the SAM-dependent methylations of uroporphyrinogen III at position C-2 and C-7 to form precorrin-2 via precorrin-1. Then it catalyzes the NAD-dependent ring dehydrogenation of precorrin-2 to yield sirohydrochlorin. Finally, it catalyzes the ferrochelation of sirohydrochlorin to yield siroheme. This is Siroheme synthase from Neisseria meningitidis serogroup B (strain ATCC BAA-335 / MC58).